A 145-amino-acid polypeptide reads, in one-letter code: 3-hydroxyacyl-[acyl-carrier-protein] dehydratase FabZ (145 aa).

His-51 is a catalytic residue.

The protein belongs to the thioester dehydratase family. FabZ subfamily.

The protein localises to the cytoplasm. It carries out the reaction a (3R)-hydroxyacyl-[ACP] = a (2E)-enoyl-[ACP] + H2O. Involved in unsaturated fatty acids biosynthesis. Catalyzes the dehydration of short chain beta-hydroxyacyl-ACPs and long chain saturated and unsaturated beta-hydroxyacyl-ACPs. The polypeptide is 3-hydroxyacyl-[acyl-carrier-protein] dehydratase FabZ (Staphylococcus carnosus (strain TM300)).